Reading from the N-terminus, the 749-residue chain is Protein lin-54 homolog (749 aa).

A Glycyl lysine isopeptide (Lys-Gly) (interchain with G-Cter in SUMO2) cross-link involves residue K139. K244 and K249 each carry N6-acetyllysine. Residues S264, S282, S310, and S314 each carry the phosphoserine modification. A Glycyl lysine isopeptide (Lys-Gly) (interchain with G-Cter in SUMO2) cross-link involves residue K357. In terms of domain architecture, CRC spans 521–634 (PRKPCNCTKS…KCIGCKNFEE (114 aa)). The interval 523–536 (KPCNCTKSLCLKLY) is DNA-binding. Zn(2+) is bound by residues C525, C527, C532, C537, C539, C546, C549, C551, and C554. A linker region spans residues 583-596 (IGKGKEGESDRRHS). Residues C599, C601, C606, C611, C613, C620, C624, C626, and C629 each contribute to the Zn(2+) site. The interval 599 to 612 (CNCKRSGCLKNYCE) is DNA-binding. At S635 the chain carries Phosphoserine. Residues K639, K659, and K661 each participate in a glycyl lysine isopeptide (Lys-Gly) (interchain with G-Cter in SUMO2) cross-link.

The protein belongs to the lin-54 family. Component of the DREAM complex (also named LINC complex) at least composed of E2F4, E2F5, LIN9, LIN37, LIN52, LIN54, MYBL1, MYBL2, RBL1, RBL2, RBBP4, RBL2, TFDP1 and TFDP2. The complex exists in quiescent cells where it represses cell cycle-dependent genes. It dissociates in S phase when LIN9, LIN37, LIN52 and LIN54 form a subcomplex that binds to MYBL2.

It is found in the nucleus. Its function is as follows. Component of the DREAM complex, a multiprotein complex that can both act as a transcription activator or repressor depending on the context. In G0 phase, the complex binds to more than 800 promoters and is required for repression of E2F target genes. In S phase, the complex selectively binds to the promoters of G2/M genes whose products are required for mitosis and participates in their cell cycle dependent activation. In the complex, acts as a DNA-binding protein that binds the promoter of CDK1 in a sequence-specific manner. Specifically recognizes the consensus motif 5'-TTYRAA-3' in target DNA. The sequence is that of Protein lin-54 homolog (Lin54) from Mus musculus (Mouse).